A 475-amino-acid chain; its full sequence is Sulfate adenylyltransferase subunit 1 (475 aa).

The tr-type G domain maps to 25-239 (KSLLRFLTCG…EVLETVEIQR (215 aa)). Residues 34 to 41 (GSVDDGKS) form a G1 region. 34–41 (GSVDDGKS) serves as a coordination point for GTP. A G2 region spans residues 92-96 (GITID). A G3 region spans residues 113 to 116 (DTPG). Residues 113–117 (DTPGH) and 168–171 (NKMD) contribute to the GTP site. The tract at residues 168–171 (NKMD) is G4. A G5 region spans residues 206 to 208 (SAL).

Belongs to the TRAFAC class translation factor GTPase superfamily. Classic translation factor GTPase family. CysN/NodQ subfamily. Heterodimer composed of CysD, the smaller subunit, and CysN.

It carries out the reaction sulfate + ATP + H(+) = adenosine 5'-phosphosulfate + diphosphate. The protein operates within sulfur metabolism; hydrogen sulfide biosynthesis; sulfite from sulfate: step 1/3. In terms of biological role, with CysD forms the ATP sulfurylase (ATPS) that catalyzes the adenylation of sulfate producing adenosine 5'-phosphosulfate (APS) and diphosphate, the first enzymatic step in sulfur assimilation pathway. APS synthesis involves the formation of a high-energy phosphoric-sulfuric acid anhydride bond driven by GTP hydrolysis by CysN coupled to ATP hydrolysis by CysD. This Escherichia coli O17:K52:H18 (strain UMN026 / ExPEC) protein is Sulfate adenylyltransferase subunit 1.